The following is a 185-amino-acid chain: Ribosome-recycling factor (185 aa).

This sequence belongs to the RRF family.

Its subcellular location is the cytoplasm. In terms of biological role, responsible for the release of ribosomes from messenger RNA at the termination of protein biosynthesis. May increase the efficiency of translation by recycling ribosomes from one round of translation to another. In Vibrio parahaemolyticus serotype O3:K6 (strain RIMD 2210633), this protein is Ribosome-recycling factor.